An 83-amino-acid polypeptide reads, in one-letter code: uncharacterized protein (83 aa).

This sequence belongs to the BolA/IbaG family.

This is an uncharacterized protein from Acinetobacter guillouiae (Acinetobacter genomosp. 11).